The chain runs to 256 residues: uncharacterized protein (256 aa).

Positions 211 to 256 (RKLQASVTTTPPKRCKLADRPAQTTQDTPRAPQPAPVRAQRPLFTL) are disordered. The segment covering 246 to 256 (PVRAQRPLFTL) has biased composition (low complexity).

This is an uncharacterized protein from Orgyia pseudotsugata (Douglas-fir tussock moth).